We begin with the raw amino-acid sequence, 766 residues long: 5-methyltetrahydropteroyltriglutamate--homocysteine methyltransferase (766 aa).

Residues 16 to 19 (RELK) and Lys-119 each bind 5-methyltetrahydropteroyltri-L-glutamate. L-homocysteine-binding positions include 440 to 442 (IGS) and Glu-493. Residues 440–442 (IGS) and Glu-493 contribute to the L-methionine site. 5-methyltetrahydropteroyltri-L-glutamate-binding positions include 524-525 (RC) and Trp-570. Asp-608 is an L-homocysteine binding site. Asp-608 is an L-methionine binding site. Glu-614 serves as a coordination point for 5-methyltetrahydropteroyltri-L-glutamate. Positions 650, 652, and 674 each coordinate Zn(2+). Residue His-703 is the Proton donor of the active site. Cys-735 contributes to the Zn(2+) binding site.

The protein belongs to the vitamin-B12 independent methionine synthase family. Zn(2+) is required as a cofactor.

It carries out the reaction 5-methyltetrahydropteroyltri-L-glutamate + L-homocysteine = tetrahydropteroyltri-L-glutamate + L-methionine. Its pathway is amino-acid biosynthesis; L-methionine biosynthesis via de novo pathway; L-methionine from L-homocysteine (MetE route): step 1/1. Its function is as follows. Catalyzes the transfer of a methyl group from 5-methyltetrahydrofolate to homocysteine resulting in methionine formation. This Pseudomonas aeruginosa (strain LESB58) protein is 5-methyltetrahydropteroyltriglutamate--homocysteine methyltransferase.